We begin with the raw amino-acid sequence, 574 residues long: E3 ubiquitin-protein ligase TRIM23 (574 aa).

The RING-type; degenerate zinc-finger motif lies at 31 to 76 (CGVCEDVFSLQGDKVPRLLLCGHTVCHDCLTRLPLHGRAIRCPFDR). A B box-type; degenerate zinc finger spans residues 122–168 (ESIIRCDEDEAHVASVYCTVCATHLCSDCSQVTHSTKTLAKHRRVPL). The stretch at 352-379 (RVVLAKQEITRLLETLQKQQQQFTEVAD) forms a coiled coil. Positions 390–574 (TFTKDNRVHI…LVAAGVLDVA (185 aa)) are ARF-like. GTP-binding positions include 411 to 418 (GLDGAGKT), 454 to 458 (DVGGK), and 513 to 516 (NKQD).

The protein in the C-terminal section; belongs to the small GTPase superfamily. Arf family. As to quaternary structure, homodimer. Interacts with PSCD1. Interacts with UBE2D2. Interacts with TBK1 (via N-terminal kinase domain) and p62/SQSTM1.

It localises to the cytoplasm. The protein localises to the endomembrane system. The protein resides in the golgi apparatus membrane. It is found in the lysosome membrane. It carries out the reaction S-ubiquitinyl-[E2 ubiquitin-conjugating enzyme]-L-cysteine + [acceptor protein]-L-lysine = [E2 ubiquitin-conjugating enzyme]-L-cysteine + N(6)-ubiquitinyl-[acceptor protein]-L-lysine.. It functions in the pathway protein modification; protein ubiquitination. In terms of biological role, acts as an E3 ubiquitin-protein ligase. Plays an essential role in autophagy activation during viral infection. Mechanistically, activates TANK-binding kinase 1/TBK1 by facilitating its dimerization and ability to phosphorylate the selective autophagy receptor SQSTM1. In order to achieve this function, TRIM23 mediates 'Lys-27'-linked auto-ubiquitination of its ADP-ribosylation factor (ARF) domain to induce its GTPase activity and its recruitment to autophagosomes. The polypeptide is E3 ubiquitin-protein ligase TRIM23 (Trim23) (Mus musculus (Mouse)).